The sequence spans 184 residues: Gastrokine-2 (184 aa).

The first 20 residues, 1–20 (MKPLVAFLVVLSIFGIQSQA), serve as a signal peptide directing secretion. The BRICHOS domain occupies 54–151 (HSGSCSSTTI…LCKHMPLYEG (98 aa)). Cys81 and Cys143 are disulfide-bonded.

In terms of assembly, heterodimer with TFF1; disulfide linked. Interacts with TFF2. As to expression, stomach foveolar epithelium and duodenal Brunner's glands.

The protein resides in the secreted. It localises to the golgi apparatus. This is Gastrokine-2 (Gkn2) from Mus musculus (Mouse).